The chain runs to 134 residues: Large ribosomal subunit protein uL16c (134 aa).

A compositionally biased stretch (basic residues) spans M1–M17. Positions M1–S21 are disordered.

This sequence belongs to the universal ribosomal protein uL16 family. In terms of assembly, part of the 50S ribosomal subunit.

It localises to the plastid. Its subcellular location is the chloroplast. This chain is Large ribosomal subunit protein uL16c, found in Solanum bulbocastanum (Wild potato).